The following is a 187-amino-acid chain: Serine/arginine-rich splicing factor RSZ21 (187 aa).

Positions 2–73 constitute an RRM domain; it reads TRVYVGNLDP…WRVELSHKDK (72 aa). 2 disordered regions span residues 68 to 89 and 105 to 187; these read LSHK…IEDS and RRGR…ANGV. The segment at 89-106 adopts a CCHC-type zinc-finger fold; it reads SKCYECGELGHFARECRR. Over residues 107–122 the composition is skewed to basic residues; the sequence is GRGSVRRRSPSPRRRR. A phosphoserine mark is found at Ser-123, Ser-132, Ser-134, Ser-140, Ser-146, and Ser-159. Residues 136-155 are compositionally biased toward basic residues; it reads RGRRSPPRRRSVTPPRRGRS. Residues 165-177 are compositionally biased toward basic and acidic residues; that stretch reads SRRDSPRRRDSPY. Over residues 178–187 the composition is skewed to low complexity; it reads GRRSPYANGV. Ser-181 carries the phosphoserine modification.

It belongs to the splicing factor SR family. RSZ subfamily. In terms of assembly, component of the spliceosome. Interacts with SNRNP35, AFC2, CYP59, RS2Z33 and RNU1. Interacts with MOS14. In terms of processing, extensively phosphorylated on serine residues in the RS domain. Phosphorylated by AFC2. As to expression, expressed in roots, leaves, flowers and siliques.

Its subcellular location is the nucleus speckle. Probably involved in intron recognition and spliceosome assembly. The polypeptide is Serine/arginine-rich splicing factor RSZ21 (RSZ21) (Arabidopsis thaliana (Mouse-ear cress)).